We begin with the raw amino-acid sequence, 617 residues long: MTVTEQTTARGFPLLPSRLSRGSQATRTTDNTAAALLLTFTVIAILWANSPWAQSYSTLLETHIGFGFGDHHFEMTVKHLVNDALMTFFFFIVGLEVTREFTIGELTDRSRAAVPVVAAAAGLIVPAIVFLAFNPSGDNAHAWGVVISTDTAFLVGALAIIKPKFPARVRLFLLTLAVVDDVGALVAIAVFYSDAIQVGPLVVAVAVLVALALVRFLPVARGPAYAVLGVALWVALYLAGIHPTLAGVAVALLIPVFTPERRPVERAVDQIRAFRQSPNSQYARAASRSLRESISINERMQTAVGPAVSFVILPLFALVNAGVLLDGQSLMTALRSPLTWGVVAGLVIGKFVGITGATWLMRRTGLGVLAPGLTLRRIAGGAALSGIGFTISLFIVDIAISDSSRQDQARIGVLAASVLAFVFGWAIFRITDWLSPPEPVGLKLLRPVEPDRDHVRGRYDAPLVLVEYGDFECPFCSRATGAIDEVRAHFGDDLLYVWRHFPLERAHPRAFDAARASEAAALQGKFWEMAHELFDHQDDLEWSDMYRYAVAAGCDIEQFDQDVRVHSSKVLHRVTDDAEDAEAMDLNATPTLFVNGIRHKGPWDAASLIRALEAGRR.

The na(+)/H(+) antiporter NhaA stretch occupies residues 1–433 (MTVTEQTTAR…GWAIFRITDW (433 aa)). Helical transmembrane passes span 33 to 53 (AAAL…SPWA), 75 to 95 (MTVK…IVGL), 113 to 133 (AVPV…FLAF), 141 to 161 (HAWG…LAII), 171 to 191 (LFLL…IAVF), 194 to 214 (DAIQ…LALV), 234 to 254 (VALY…ALLI), 304 to 324 (VGPA…AGVL), 340 to 360 (WGVV…ATWL), 378 to 398 (IAGG…IVDI), and 411 to 431 (IGVL…FRIT). One can recognise a Thioredoxin domain in the interval 434 to 617 (LSPPEPVGLK…LIRALEAGRR (184 aa)).

In the N-terminal section; belongs to the NhaA Na(+)/H(+) (TC 2.A.33) antiporter family.

The protein resides in the cell membrane. The enzyme catalyses Na(+)(in) + 2 H(+)(out) = Na(+)(out) + 2 H(+)(in). Na(+)/H(+) antiporter that extrudes sodium in exchange for external protons. In Mycolicibacterium vanbaalenii (strain DSM 7251 / JCM 13017 / BCRC 16820 / KCTC 9966 / NRRL B-24157 / PYR-1) (Mycobacterium vanbaalenii), this protein is Na(+)/H(+) antiporter NhaA 1.